The chain runs to 94 residues: Co-chaperonin GroES (94 aa).

This sequence belongs to the GroES chaperonin family. As to quaternary structure, heptamer of 7 subunits arranged in a ring. Interacts with the chaperonin GroEL.

Its subcellular location is the cytoplasm. In terms of biological role, together with the chaperonin GroEL, plays an essential role in assisting protein folding. The GroEL-GroES system forms a nano-cage that allows encapsulation of the non-native substrate proteins and provides a physical environment optimized to promote and accelerate protein folding. GroES binds to the apical surface of the GroEL ring, thereby capping the opening of the GroEL channel. This Leuconostoc citreum (strain KM20) protein is Co-chaperonin GroES.